The sequence spans 421 residues: Histidine--tRNA ligase (421 aa).

It belongs to the class-II aminoacyl-tRNA synthetase family. In terms of assembly, homodimer.

It localises to the cytoplasm. The enzyme catalyses tRNA(His) + L-histidine + ATP = L-histidyl-tRNA(His) + AMP + diphosphate + H(+). In Fervidobacterium nodosum (strain ATCC 35602 / DSM 5306 / Rt17-B1), this protein is Histidine--tRNA ligase.